Reading from the N-terminus, the 156-residue chain is ATP synthase subunit b (156 aa).

Residues 3 to 23 (ITFTIFAQSLAFAALIWIVAT) form a helical membrane-spanning segment.

It belongs to the ATPase B chain family. F-type ATPases have 2 components, F(1) - the catalytic core - and F(0) - the membrane proton channel. F(1) has five subunits: alpha(3), beta(3), gamma(1), delta(1), epsilon(1). F(0) has three main subunits: a(1), b(2) and c(10-14). The alpha and beta chains form an alternating ring which encloses part of the gamma chain. F(1) is attached to F(0) by a central stalk formed by the gamma and epsilon chains, while a peripheral stalk is formed by the delta and b chains.

It is found in the cell inner membrane. Functionally, f(1)F(0) ATP synthase produces ATP from ADP in the presence of a proton or sodium gradient. F-type ATPases consist of two structural domains, F(1) containing the extramembraneous catalytic core and F(0) containing the membrane proton channel, linked together by a central stalk and a peripheral stalk. During catalysis, ATP synthesis in the catalytic domain of F(1) is coupled via a rotary mechanism of the central stalk subunits to proton translocation. Component of the F(0) channel, it forms part of the peripheral stalk, linking F(1) to F(0). This is ATP synthase subunit b from Xylella fastidiosa (strain M23).